The following is a 138-amino-acid chain: Large ribosomal subunit protein uL16c (138 aa).

Belongs to the universal ribosomal protein uL16 family. Part of the 50S ribosomal subunit.

The protein localises to the plastid. Its subcellular location is the chloroplast. The chain is Large ribosomal subunit protein uL16c from Physcomitrium patens (Spreading-leaved earth moss).